The sequence spans 829 residues: Periplasmic nitrate reductase (829 aa).

The segment at residues 1–29 (MKMTRRAFVKANAAASAAAVAGVTLPASA) is a signal peptide (tat-type signal). Residues 41-97 (IKWDKAPCRFCGTGCSVLVGTQNGRVVATQGDPEAPVNKGLNCIKGYFLSKIMYGKD) enclose the 4Fe-4S Mo/W bis-MGD-type domain. Residues C48, C51, C55, and C83 each contribute to the [4Fe-4S] cluster site. Residues K85, Q152, N177, C181, 214–221 (WGSNMAEM), 245–249 (STYYH), 264–266 (QSD), M374, Q378, N484, 510–511 (SD), K533, D560, and 718–727 (TGRVLEHWHT) contribute to the Mo-bis(molybdopterin guanine dinucleotide) site. F794 contacts substrate. Mo-bis(molybdopterin guanine dinucleotide) is bound by residues N802 and K819.

It belongs to the prokaryotic molybdopterin-containing oxidoreductase family. NasA/NapA/NarB subfamily. In terms of assembly, component of the periplasmic nitrate reductase NapAB complex composed of NapA and NapB. Requires [4Fe-4S] cluster as cofactor. It depends on Mo-bis(molybdopterin guanine dinucleotide) as a cofactor. Post-translationally, predicted to be exported by the Tat system. The position of the signal peptide cleavage has not been experimentally proven.

The protein localises to the periplasm. It carries out the reaction 2 Fe(II)-[cytochrome] + nitrate + 2 H(+) = 2 Fe(III)-[cytochrome] + nitrite + H2O. In terms of biological role, catalytic subunit of the periplasmic nitrate reductase complex NapAB. Receives electrons from NapB and catalyzes the reduction of nitrate to nitrite. The chain is Periplasmic nitrate reductase from Aliivibrio fischeri (strain MJ11) (Vibrio fischeri).